The following is a 130-amino-acid chain: Small ribosomal subunit protein uS9 (130 aa).

The protein belongs to the universal ribosomal protein uS9 family.

The polypeptide is Small ribosomal subunit protein uS9 (rpsI) (Haemophilus influenzae (strain ATCC 51907 / DSM 11121 / KW20 / Rd)).